The sequence spans 362 residues: N-acylethanolamine-hydrolyzing acid amidase (362 aa).

The N-terminal stretch at 1–33 (MGTLATRAACHGAHLALALLLLLSLSGPWLSAV) is a signal peptide. 2 N-linked (GlcNAc...) asparagine glycosylation sites follow: N42 and N112. C131 serves as the catalytic Nucleophile. N-linked (GlcNAc...) asparagine glycosylation is found at N314 and N338.

This sequence belongs to the acid ceramidase family. As to quaternary structure, heterodimer of an alpha and a beta subunit, produced by autocatalytic cleavage. In terms of processing, N-glycosylated. Tunicamycin treatment causes a reduction in specific activity against N-palmitoylethanolamine. Autoproteolytic cleavage at pH 4.5 gives rise to the alpha and beta subunit. Cleavage gives rise to a conformation change that activates the enzyme. The same catalytic Cys residue mediates the autoproteolytic cleavage and subsequent hydrolysis of lipid substrates.

The protein resides in the lysosome. It is found in the membrane. The catalysed reaction is N-hexadecanoylethanolamine + H2O = ethanolamine + hexadecanoate. The enzyme catalyses an N-(long-chain fatty acyl)ethanolamine + H2O = a long-chain fatty acid + ethanolamine. It carries out the reaction N-dodecanoylethanolamine + H2O = dodecanoate + ethanolamine. It catalyses the reaction N-tetradecanoylethanolamine + H2O = tetradecanoate + ethanolamine. The catalysed reaction is an N-acylsphing-4-enine + H2O = sphing-4-enine + a fatty acid. The enzyme catalyses N-hexadecanoylsphing-4-enine + H2O = sphing-4-enine + hexadecanoate. It carries out the reaction N-dodecanoylsphing-4-enine + H2O = dodecanoate + sphing-4-enine. It participates in lipid metabolism; fatty acid metabolism. Functionally, degrades bioactive fatty acid amides to their corresponding acids, with the following preference: N-palmitoylethanolamine &gt; N-myristoylethanolamine &gt; N-stearoylethanolamine &gt; N-oleoylethanolamine &gt; N-linoleoylethanolamine &gt; N-arachidonoylethanolamine. The polypeptide is N-acylethanolamine-hydrolyzing acid amidase (Mus musculus (Mouse)).